The following is a 31-amino-acid chain: Cycloviolacin-O14 (31 aa).

The segment at residues 1 to 31 (GSIPACGESCFKGKCYTPGCSCSKYPLCAKN) is a cross-link (cyclopeptide (Gly-Asn)). Intrachain disulfides connect Cys-6-Cys-20, Cys-10-Cys-22, and Cys-15-Cys-28.

In terms of processing, this is a cyclic peptide. In terms of tissue distribution, expressed in leaves and petioles but not in petals, roots and runners (at protein level).

In terms of biological role, probably participates in a plant defense mechanism. Has hemolytic activity. This chain is Cycloviolacin-O14, found in Viola odorata (Sweet violet).